A 688-amino-acid polypeptide reads, in one-letter code: Elongation factor G (688 aa).

Residues 8 to 282 (EKTRNIGIMA…AIIDYLPSPM (275 aa)) enclose the tr-type G domain. GTP contacts are provided by residues 17-24 (AHIDAGKT), 81-85 (DTPGH), and 135-138 (NKMD).

The protein belongs to the TRAFAC class translation factor GTPase superfamily. Classic translation factor GTPase family. EF-G/EF-2 subfamily.

The protein resides in the cytoplasm. In terms of biological role, catalyzes the GTP-dependent ribosomal translocation step during translation elongation. During this step, the ribosome changes from the pre-translocational (PRE) to the post-translocational (POST) state as the newly formed A-site-bound peptidyl-tRNA and P-site-bound deacylated tRNA move to the P and E sites, respectively. Catalyzes the coordinated movement of the two tRNA molecules, the mRNA and conformational changes in the ribosome. The sequence is that of Elongation factor G from Phytoplasma mali (strain AT).